A 430-amino-acid chain; its full sequence is Elongation factor 1-alpha (430 aa).

Residues 7–219 (KPHVNIVFIG…DQIPEPEKPV (213 aa)) enclose the tr-type G domain. The interval 16–23 (GHVDHGKS) is G1. Position 16 to 23 (16 to 23 (GHVDHGKS)) interacts with GTP. Position 23 (S23) interacts with Mg(2+). The segment at 70–74 (GITID) is G2. The tract at residues 91–94 (DAPG) is G3. Residues 91–95 (DAPGH) and 146–149 (NKMD) each bind GTP. The G4 stretch occupies residues 146-149 (NKMD). The G5 stretch occupies residues 183 to 185 (SAW).

Belongs to the TRAFAC class translation factor GTPase superfamily. Classic translation factor GTPase family. EF-Tu/EF-1A subfamily.

Its subcellular location is the cytoplasm. The catalysed reaction is GTP + H2O = GDP + phosphate + H(+). In terms of biological role, GTP hydrolase that promotes the GTP-dependent binding of aminoacyl-tRNA to the A-site of ribosomes during protein biosynthesis. The chain is Elongation factor 1-alpha from Pyrococcus woesei.